We begin with the raw amino-acid sequence, 117 residues long: Immunoglobulin kappa variable 1-16 (117 aa).

The first 22 residues, 1 to 22, serve as a signal peptide directing secretion; sequence MDMRVLAQLLGLLLLCFPGARC. A framework-1 region spans residues 23 to 45; it reads DIQMTQSPSSLSASVGDRVTITC. An Ig-like domain is found at 24 to 117; it reads IQMTQSPSSL…YYCQQYNSYP (94 aa). Cys-45 and Cys-110 form a disulfide bridge. The interval 46–56 is complementarity-determining-1; that stretch reads RASQGISNYLA. A framework-2 region spans residues 57–71; it reads WFQQKPGKAPKSLIY. Residues 72–78 are complementarity-determining-2; it reads AASSLQS. The framework-3 stretch occupies residues 79-110; that stretch reads GVPSKFSGSGSGTDFTLTISSLQPEDFATYYC. Residues 111–117 form a complementarity-determining-3 region; sequence QQYNSYP.

In terms of assembly, immunoglobulins are composed of two identical heavy chains and two identical light chains; disulfide-linked.

The protein localises to the secreted. It localises to the cell membrane. V region of the variable domain of immunoglobulin light chains that participates in the antigen recognition. Immunoglobulins, also known as antibodies, are membrane-bound or secreted glycoproteins produced by B lymphocytes. In the recognition phase of humoral immunity, the membrane-bound immunoglobulins serve as receptors which, upon binding of a specific antigen, trigger the clonal expansion and differentiation of B lymphocytes into immunoglobulins-secreting plasma cells. Secreted immunoglobulins mediate the effector phase of humoral immunity, which results in the elimination of bound antigens. The antigen binding site is formed by the variable domain of one heavy chain, together with that of its associated light chain. Thus, each immunoglobulin has two antigen binding sites with remarkable affinity for a particular antigen. The variable domains are assembled by a process called V-(D)-J rearrangement and can then be subjected to somatic hypermutations which, after exposure to antigen and selection, allow affinity maturation for a particular antigen. The protein is Immunoglobulin kappa variable 1-16 of Homo sapiens (Human).